Here is a 347-residue protein sequence, read N- to C-terminus: 4-hydroxy-2-oxovalerate aldolase 1 (347 aa).

A Pyruvate carboxyltransferase domain is found at 8-261 (VTLYDMSLLX…ETGIDLYKIM (254 aa)). His20 acts as the Proton acceptor in catalysis. 2 residues coordinate substrate: Ser171 and His200. The Mn(2+) site is built by His200 and His202. Residue Tyr291 coordinates substrate.

It belongs to the 4-hydroxy-2-oxovalerate aldolase family.

The enzyme catalyses (S)-4-hydroxy-2-oxopentanoate = acetaldehyde + pyruvate. This Metapseudomonas furukawaii (Pseudomonas furukawaii) protein is 4-hydroxy-2-oxovalerate aldolase 1 (salH).